Here is a 601-residue protein sequence, read N- to C-terminus: Transcription factor Ken (601 aa).

The BTB domain maps to Ala-33–Ser-101. Disordered regions lie at residues Ala-188 to Pro-276, Leu-331 to Pro-365, and Asp-471 to Asn-491. 2 stretches are compositionally biased toward basic and acidic residues: residues Glu-190–Lys-200 and Cys-207–Lys-216. The segment covering Asn-223–Gly-234 has biased composition (polar residues). Residues Ser-235–Gln-247 show a composition bias toward low complexity. A compositionally biased stretch (basic residues) spans Gln-248–His-258. Residues Asn-259–Asn-275 show a composition bias toward low complexity. Residues Arg-476–Ser-490 are compositionally biased toward low complexity. 3 C2H2-type zinc fingers span residues Tyr-500–His-522, Phe-528–His-551, and Tyr-567–His-590.

In terms of tissue distribution, expressed from stage 5 in two rather faint stripes at positions of 64% (anterior domain; AD) and 17% (posterior domain; PD) egg length. During early gastrulation, at stage 6, these two stripes become more evident and detectable at the region posterior to the cephalic furrow and in the hindgut primordium. The AD disappears as gastrulation proceeds, while the PD remains. At stage 15, the AD appears again in the foregut, and PD expression in the hindgut and anal pad. In imaginal disks, it is ubiquitously expressed in both males and females in genital and eye-antennal disks. Not expressed in the brain. In genital disks, it is expressed along the margin of the anterior bulbus in males, while in females it is expressed in the posterior compartment along the anterior-posterior border, with medial expansion in the most posterior region.

Its subcellular location is the nucleus. Its function is as follows. Transcription factor required for terminalia development. Negative regulator of the JAK/STAT pathway: represses JAK/STAT-dependent expression of ventral veins lacking (vvl) in the posterior spiracles. In Drosophila melanogaster (Fruit fly), this protein is Transcription factor Ken (ken).